The primary structure comprises 284 residues: Transmembrane protein 163b (284 aa).

The tract at residues 1-44 (MTDSSSASDPTAGPVDPGPAPSAPDPALEDPASTPANGHHPNQA) is disordered. Residues 1 to 83 (MTDSSSASDP…HEAQSYRKKA (83 aa)) lie on the Cytoplasmic side of the membrane. The chain crosses the membrane as a helical span at residues 84 to 104 (LWVSWVSIVVTMILAIAAFTV). Residues 105–111 (SIMRHSA) lie on the Extracellular side of the membrane. Residues 112–132 (SAFGFAFDATLDVLSSIIVLW) form a helical membrane-spanning segment. Topologically, residues 133-145 (RYSNAAAVHSAHR) are cytoplasmic. A helical transmembrane segment spans residues 146-166 (EYIACVILGVVFILSAITILV). At 167 to 182 (KAIHDLATKLEPEVDD) the chain is on the extracellular side. A helical membrane pass occupies residues 183 to 203 (FLYSVSVISGVVCTVLCVCKF). The Cytoplasmic portion of the chain corresponds to 204 to 212 (MLGKVLTSR). Residues 213 to 233 (ALITDGFNSLVGGVMGFSILI) form a helical membrane-spanning segment. Residues 234–243 (SAEVFKHEPS) lie on the Extracellular side of the membrane. Residues 244 to 264 (VWFLDGTIGILIGLIILAYGV) traverse the membrane as a helical segment. Residues 265–284 (KLLKDMVPRIRQTRHYERFE) are Cytoplasmic-facing.

This sequence belongs to the TMEM163 family.

It localises to the cytoplasmic vesicle. The protein resides in the secretory vesicle. It is found in the synaptic vesicle membrane. Its subcellular location is the early endosome membrane. The protein localises to the late endosome membrane. It localises to the lysosome membrane. The protein resides in the cell membrane. The enzyme catalyses Zn(2+)(in) = Zn(2+)(out). Its function is as follows. Zinc ion transporter that mediates zinc efflux and plays a crucial role in intracellular zinc homeostasis. Binds the divalent cations Zn(2+), Ni(2+), and to a minor extent Cu(2+). Is a functional modulator of P2X purinoceptors, including P2RX1, P2RX3, P2RX4 and P2RX7. Plays a role in central nervous system development and is required for myelination, and survival and proliferation of oligodendrocytes. The chain is Transmembrane protein 163b from Danio rerio (Zebrafish).